The primary structure comprises 147 residues: Insertion element IS402 uncharacterized 16.2 kDa protein (147 aa).

The tract at residues 106–147 is disordered; that stretch reads DSSSIRAVGAGQKLGQTPPIARDPVPSTTSSPTPTVRRSPRS. Residues 129-147 show a composition bias toward low complexity; the sequence is PVPSTTSSPTPTVRRSPRS.

This sequence belongs to the transposase 6 family.

This chain is Insertion element IS402 uncharacterized 16.2 kDa protein, found in Burkholderia cepacia (Pseudomonas cepacia).